The sequence spans 356 residues: sn-glycerol-3-phosphate import ATP-binding protein UgpC (356 aa).

The ABC transporter domain occupies 4–235 (LKLQAVTKSW…PASLFVASFI (232 aa)). Residue 37 to 44 (GPSGCGKS) participates in ATP binding.

The protein belongs to the ABC transporter superfamily. sn-glycerol-3-phosphate importer (TC 3.A.1.1.3) family. The complex is composed of two ATP-binding proteins (UgpC), two transmembrane proteins (UgpA and UgpE) and a solute-binding protein (UgpB).

It localises to the cell inner membrane. The enzyme catalyses sn-glycerol 3-phosphate(out) + ATP + H2O = sn-glycerol 3-phosphate(in) + ADP + phosphate + H(+). Functionally, part of the ABC transporter complex UgpBAEC involved in sn-glycerol-3-phosphate (G3P) import. Responsible for energy coupling to the transport system. The chain is sn-glycerol-3-phosphate import ATP-binding protein UgpC from Shigella boydii serotype 4 (strain Sb227).